The primary structure comprises 237 residues: Ribonuclease 3 (237 aa).

The RNase III domain maps to 4-133 (LTELENSLGV…VLAAIYIDKG (130 aa)). Mg(2+) is bound at residue Glu46. Residues Asp50 and Glu122 contribute to the active site. Glu122 is a Mg(2+) binding site. Residues 160–229 (DYKSRLQELI…AKVALQQFEN (70 aa)) enclose the DRBM domain.

It belongs to the ribonuclease III family. Homodimer. Mg(2+) is required as a cofactor.

Its subcellular location is the cytoplasm. The enzyme catalyses Endonucleolytic cleavage to 5'-phosphomonoester.. Its function is as follows. Digests double-stranded RNA. Involved in the processing of primary rRNA transcript to yield the immediate precursors to the large and small rRNAs (23S and 16S). Processes some mRNAs, and tRNAs when they are encoded in the rRNA operon. Processes pre-crRNA and tracrRNA of type II CRISPR loci if present in the organism. This Dehalococcoides mccartyi (strain CBDB1) protein is Ribonuclease 3.